Reading from the N-terminus, the 345-residue chain is S-adenosylmethionine:tRNA ribosyltransferase-isomerase (345 aa).

The protein belongs to the QueA family. Monomer.

It is found in the cytoplasm. The enzyme catalyses 7-aminomethyl-7-carbaguanosine(34) in tRNA + S-adenosyl-L-methionine = epoxyqueuosine(34) in tRNA + adenine + L-methionine + 2 H(+). The protein operates within tRNA modification; tRNA-queuosine biosynthesis. Transfers and isomerizes the ribose moiety from AdoMet to the 7-aminomethyl group of 7-deazaguanine (preQ1-tRNA) to give epoxyqueuosine (oQ-tRNA). The protein is S-adenosylmethionine:tRNA ribosyltransferase-isomerase of Helicobacter pylori (strain ATCC 700392 / 26695) (Campylobacter pylori).